Here is a 120-residue protein sequence, read N- to C-terminus: Cytochrome c oxidase subunit 5 (120 aa).

S2 is subject to Blocked amino end (Ser). Zn(2+)-binding residues include C76, H84, C99, and C102.

The protein belongs to the cytochrome c oxidase subunit 5B family. In terms of assembly, component of the cytochrome c oxidase (complex IV, CIV), a multisubunit enzyme composed of a catalytic core of 3 subunits and several supernumerary subunits. The complex exists as a monomer or a dimer and forms supercomplexes (SCs) in the inner mitochondrial membrane with ubiquinol-cytochrome c oxidoreductase (cytochrome b-c1 complex, complex III, CIII). Slime mold cytochrome c oxidase consists of at least seven different polypeptides species, subunits I, II, III, IV, V, VI, and VIIe/s in order of MW.

It is found in the mitochondrion inner membrane. The protein operates within energy metabolism; oxidative phosphorylation. Functionally, component of the cytochrome c oxidase, the last enzyme in the mitochondrial electron transport chain which drives oxidative phosphorylation. The respiratory chain contains 3 multisubunit complexes succinate dehydrogenase (complex II, CII), ubiquinol-cytochrome c oxidoreductase (cytochrome b-c1 complex, complex III, CIII) and cytochrome c oxidase (complex IV, CIV), that cooperate to transfer electrons derived from NADH and succinate to molecular oxygen, creating an electrochemical gradient over the inner membrane that drives transmembrane transport and the ATP synthase. Cytochrome c oxidase is the component of the respiratory chain that catalyzes the reduction of oxygen to water. Electrons originating from reduced cytochrome c in the intermembrane space (IMS) are transferred via the dinuclear copper A center (CU(A)) of subunit 2 and heme A of subunit 1 to the active site in subunit 1, a binuclear center (BNC) formed by heme A3 and copper B (CU(B)). The BNC reduces molecular oxygen to 2 water molecules using 4 electrons from cytochrome c in the IMS and 4 protons from the mitochondrial matrix. This is Cytochrome c oxidase subunit 5 (cxeA) from Dictyostelium discoideum (Social amoeba).